The following is a 334-amino-acid chain: Ornithine carbamoyltransferase (334 aa).

Carbamoyl phosphate contacts are provided by residues 57 to 60 (STRT), glutamine 84, arginine 108, and 135 to 138 (HPTQ). L-ornithine-binding positions include asparagine 169, aspartate 233, and 237–238 (SM). Carbamoyl phosphate contacts are provided by residues 275-276 (CL) and arginine 320.

It belongs to the aspartate/ornithine carbamoyltransferase superfamily. OTCase family. As to quaternary structure, homotrimer.

The protein resides in the cytoplasm. The catalysed reaction is carbamoyl phosphate + L-ornithine = L-citrulline + phosphate + H(+). It functions in the pathway amino-acid biosynthesis; L-arginine biosynthesis; L-arginine from L-ornithine and carbamoyl phosphate: step 1/3. In terms of biological role, reversibly catalyzes the transfer of the carbamoyl group from carbamoyl phosphate (CP) to the N(epsilon) atom of ornithine (ORN) to produce L-citrulline. The sequence is that of Ornithine carbamoyltransferase from Vibrio vulnificus (strain CMCP6).